The sequence spans 574 residues: Sulfate adenylyltransferase (574 aa).

The interval 1–170 (MANTPHGGVL…LEAINRLEHY (170 aa)) is N-terminal. Positions 171–395 (DFLDLRFTPS…LREENPLPAE (225 aa)) are catalytic. Residue Q198 coordinates sulfate. Residues 198–201 (QTRN) and 292–295 (GRDH) each bind ATP. Catalysis depends on residues T199, R200, and N201. Position 200 (R200) interacts with sulfate. A296 is a binding site for sulfate. ATP is bound at residue M334. The segment at 396–574 (KGFTVFMTGY…LESNGLLDRL (179 aa)) is allosteric regulation domain; adenylyl-sulfate kinase-like. 3'-phosphoadenylyl sulfate is bound by residues 435 to 438 (ENVR), R452, 478 to 479 (IA), and K516.

The protein in the N-terminal section; belongs to the sulfate adenylyltransferase family. It in the C-terminal section; belongs to the APS kinase family. Homohexamer. Dimer of trimers.

The protein resides in the cytoplasm. It carries out the reaction sulfate + ATP + H(+) = adenosine 5'-phosphosulfate + diphosphate. The protein operates within sulfur metabolism; hydrogen sulfide biosynthesis; sulfite from sulfate: step 1/3. With respect to regulation, allosterically inhibited by 3'-phosphoadenosine 5'-phosphosulfate (PAPS). Its function is as follows. Catalyzes the first intracellular reaction of sulfate assimilation, forming adenosine-5'-phosphosulfate (APS) from inorganic sulfate and ATP. Plays an important role in sulfate activation as a component of the biosynthesis pathway of sulfur-containing amino acids. The sequence is that of Sulfate adenylyltransferase from Gibberella zeae (strain ATCC MYA-4620 / CBS 123657 / FGSC 9075 / NRRL 31084 / PH-1) (Wheat head blight fungus).